A 268-amino-acid chain; its full sequence is Hydroxyethylthiazole kinase (268 aa).

Methionine 49 is a binding site for substrate. Positions 124 and 168 each coordinate ATP. Alanine 195 lines the substrate pocket.

It belongs to the Thz kinase family. Requires Mg(2+) as cofactor.

It carries out the reaction 5-(2-hydroxyethyl)-4-methylthiazole + ATP = 4-methyl-5-(2-phosphooxyethyl)-thiazole + ADP + H(+). It functions in the pathway cofactor biosynthesis; thiamine diphosphate biosynthesis; 4-methyl-5-(2-phosphoethyl)-thiazole from 5-(2-hydroxyethyl)-4-methylthiazole: step 1/1. Functionally, catalyzes the phosphorylation of the hydroxyl group of 4-methyl-5-beta-hydroxyethylthiazole (THZ). In Archaeoglobus fulgidus (strain ATCC 49558 / DSM 4304 / JCM 9628 / NBRC 100126 / VC-16), this protein is Hydroxyethylthiazole kinase.